Here is a 1590-residue protein sequence, read N- to C-terminus: MSTANGSSPTRISILGEESIIVDYGLWLNYVTHDLLNNIPSSTYVLITDTNLHSLYVPQFETAFTSASAAATSNSSATPPPPRAPRLLTYAIPPGEGSKSRDTKAEIEDWLLEQQCTRDTVIIALGGGVIGDMIGYVAATFMRGVRFVQVPTTLLAMVDSSIGGKTAIDTPMGKNLVGAFWQPRRIYIDLAFLNTLPAREFINGMAEVIKTAAIWDAEEFSALEQNAPAILSAVRTPASAAADPNARLLPISDILKRIVLGSARVKAHIVSADEKEGGLRNLLNFGHSIGHAFEAILTPQVLHGEAVAVGMVKEAELARHLGILRPAAVARLVKCIASYDLPISLEDKRLVRMTGGKSCPVDIVLAKMAVDKKNEGKQKKIVLLSAIGKTHEPKASSVDDRAIRVVLSAAVRVQPGVRPGLKVDVTPPGSKSISNRALILAALGKGPCRIKNLLHSDDTEHMLNAIGKLRGASFSWEDDGEILVVEGRGGQLFAPSEGELYLGNAGTASRFLTTVAALCSPSSDGDATSTVLTGNARMKLRPIGALVDALRSNGINIEYMGKESSLPIRVDAAGGFGGGVIELAATVSSQYVSSLLMAAPYAKEPVTLRLVGGKPISQPYIDMTIAMMRSFGIDVQRSTTEADTYHIPQGIYTNPAEYTVESDASSATYPLAVAAITGTTCTIPNIGSASLQGDARFAVEVLRPMGCTVEQSASSTTVTGPPLGQLKGIPHVDMEPMTDAFLTASVLAAVASGTTQITGIANQRVKECNRIKAMKDQLAKFGVHCNELDDGIEVTGNSWTELTEPREIYCYDDHRVAMSFSVLSVISPHPVLILERECTGKTWPGWWDVLSGVFGVAMDGEEPLSHSTVTGSGPNNRSVFVIGMRGAGKSTAGKWMASTLGRTFMDLDTELERRHNTTIPDMVKSEVGWEGFRKFEVELLREMMETKPEGYIFSCGGGIVETPEAREALISYCRAGGAVLLVHRDTTHVLEYLNRDKSRPAWSEEIEKVYIRRKPWYQECSNFEYHSPHLGVEESAVEMPVDFARFVSLICGKSSHLREVKAKPHSFFVSLTVPNITAHTATIPKAVVGSDAVELRVDLLQDHSPEFVVRQVALLRSLCKMPIIFTVRTVSQGGRFPDADHAGALALYRVALRMGVEYVDVEMTMPEDVIETVTKAKGYTSIIASHHDPKGTLSWRNGAWMQYYNKALHYGDVIKLVGWCRTDEDNFSLLTFKTRMLAAHESTPIIALNMGEQGKLSRVLNGFMTPVTHAALPAAAAPGQLTAAEIRQALSLLSKIPKRKFYLFGKPISKSRSPILHNTLFQQTGLPHTYSRLETDKVAEVETTIRASDFGGASVTIPLKLDIMPMLDEITDAAKTIGAVNTIIPVPVQAGKQRLRGDNTDWCGMVHSLRMAGVTGKRACPASGVVVGSGGTTRAAIFALHSLGFSPIYIIARNATSVETIASSFPAEYDIRNLQGTLAYTEGMARPEVVISTIPATGDVDEGILMAVDSVLTLPMGTSNTGAARVLLEMAYTPTFTNMMARAKDAGWGTVPGFEVLAAQGWFQFQLWTDIKPVYSTASSIVMNGTSDSS.

The interval 1-400 (MSTANGSSPT…HEPKASSVDD (400 aa)) is 3-dehydroquinate synthase. Residues 49–51 (DTN), 96–99 (EGSK), 127–129 (GGV), and aspartate 132 each bind NAD(+). Arginine 143 contributes to the 7-phospho-2-dehydro-3-deoxy-D-arabino-heptonate binding site. 152 to 153 (TT) provides a ligand contact to NAD(+). 7-phospho-2-dehydro-3-deoxy-D-arabino-heptonate-binding residues include aspartate 159 and lysine 165. Lysine 174 provides a ligand contact to NAD(+). 7-phospho-2-dehydro-3-deoxy-D-arabino-heptonate is bound at residue asparagine 175. NAD(+) contacts are provided by residues 192–195 (FLNT) and asparagine 203. Residue glutamate 207 participates in Zn(2+) binding. Residues 207 to 210 (EVIK) and lysine 266 contribute to the 7-phospho-2-dehydro-3-deoxy-D-arabino-heptonate site. Glutamate 276 acts as the Proton acceptor; for 3-dehydroquinate synthase activity in catalysis. Residues 280–284 (RNLLN) and histidine 287 each bind 7-phospho-2-dehydro-3-deoxy-D-arabino-heptonate. Histidine 287 is a binding site for Zn(2+). Histidine 291 functions as the Proton acceptor; for 3-dehydroquinate synthase activity in the catalytic mechanism. 7-phospho-2-dehydro-3-deoxy-D-arabino-heptonate contacts are provided by histidine 303 and lysine 372. Position 303 (histidine 303) interacts with Zn(2+). The interval 413–856 (VQPGVRPGLK…WDVLSGVFGV (444 aa)) is EPSP synthase. The active-site For EPSP synthase activity is cysteine 838. A shikimate kinase region spans residues 876–1070 (NRSVFVIGMR…KAKPHSFFVS (195 aa)). Position 883-890 (883-890 (GMRGAGKS)) interacts with ATP. Positions 1071–1285 (LTVPNITAHT…AAPGQLTAAE (215 aa)) are 3-dehydroquinase. The Proton acceptor; for 3-dehydroquinate dehydratase activity role is filled by histidine 1187. Lysine 1215 functions as the Schiff-base intermediate with substrate; for 3-dehydroquinate dehydratase activity in the catalytic mechanism. The tract at residues 1298 to 1590 (KRKFYLFGKP…IVMNGTSDSS (293 aa)) is shikimate dehydrogenase.

The protein in the N-terminal section; belongs to the sugar phosphate cyclases superfamily. Dehydroquinate synthase family. This sequence in the 2nd section; belongs to the EPSP synthase family. It in the 3rd section; belongs to the shikimate kinase family. In the 4th section; belongs to the type-I 3-dehydroquinase family. The protein in the C-terminal section; belongs to the shikimate dehydrogenase family. In terms of assembly, homodimer. Zn(2+) is required as a cofactor.

The protein resides in the cytoplasm. The catalysed reaction is 7-phospho-2-dehydro-3-deoxy-D-arabino-heptonate = 3-dehydroquinate + phosphate. It catalyses the reaction 3-dehydroquinate = 3-dehydroshikimate + H2O. The enzyme catalyses shikimate + NADP(+) = 3-dehydroshikimate + NADPH + H(+). It carries out the reaction shikimate + ATP = 3-phosphoshikimate + ADP + H(+). The catalysed reaction is 3-phosphoshikimate + phosphoenolpyruvate = 5-O-(1-carboxyvinyl)-3-phosphoshikimate + phosphate. Its pathway is metabolic intermediate biosynthesis; chorismate biosynthesis; chorismate from D-erythrose 4-phosphate and phosphoenolpyruvate: step 2/7. It participates in metabolic intermediate biosynthesis; chorismate biosynthesis; chorismate from D-erythrose 4-phosphate and phosphoenolpyruvate: step 3/7. It functions in the pathway metabolic intermediate biosynthesis; chorismate biosynthesis; chorismate from D-erythrose 4-phosphate and phosphoenolpyruvate: step 4/7. The protein operates within metabolic intermediate biosynthesis; chorismate biosynthesis; chorismate from D-erythrose 4-phosphate and phosphoenolpyruvate: step 5/7. Its pathway is metabolic intermediate biosynthesis; chorismate biosynthesis; chorismate from D-erythrose 4-phosphate and phosphoenolpyruvate: step 6/7. In terms of biological role, the AROM polypeptide catalyzes 5 consecutive enzymatic reactions in prechorismate polyaromatic amino acid biosynthesis. The protein is Pentafunctional AROM polypeptide of Pyricularia oryzae (strain 70-15 / ATCC MYA-4617 / FGSC 8958) (Rice blast fungus).